Here is a 618-residue protein sequence, read N- to C-terminus: Mitochondrial Rho GTPase 1 (618 aa).

Topologically, residues 1-592 are cytoplasmic; that stretch reads MKKDVRILLV…TQADLKSSTF (592 aa). A Miro 1 domain is found at 2–168; it reads KKDVRILLVG…FYYAQKAVLH (167 aa). 5 residues coordinate GTP: R14, G16, K17, T18, and S19. T18 provides a ligand contact to Mg(2+). 2 residues coordinate Mg(2+): P35 and D57. Position 59 (S59) interacts with GTP. Residue K92 is modified to N6-acetyllysine. The GTP site is built by N118, K119, D121, A149, and K150. K153 participates in a covalent cross-link: Glycyl lysine isopeptide (Lys-Gly) (interchain with G-Cter in ubiquitin). Residues 184–219 form the EF-hand 1 domain; that stretch reads ACIKALTRIFKISDQDNDGTLNDAELNFFQRICFNT. 5 residues coordinate Ca(2+): D197, D199, D201, T203, and E208. A Glycyl lysine isopeptide (Lys-Gly) (interchain with G-Cter in ubiquitin) cross-link involves residue K235. In terms of domain architecture, EF-hand 2 spans 304–339; sequence HAYLFLQSTFDKHDLDRDCALSPDELKDLFKVFPYI. Positions 317, 319, 321, 323, and 328 each coordinate Ca(2+). One can recognise a Miro 2 domain in the interval 416–579; it reads RNVFRCNVIG…FVKLTTMAMY (164 aa). N428, C429, G430, K431, S432, G433, and K447 together coordinate GTP. N428 is a binding site for Mg(2+). 15 residues coordinate GDP: N428, C429, G430, K431, S432, G433, K447, K454, S477, E478, K528, D530, T558, C559, and N560. K528, D530, T558, and C559 together coordinate GTP. K572 participates in a covalent cross-link: Glycyl lysine isopeptide (Lys-Gly) (interchain with G-Cter in ubiquitin). The chain crosses the membrane as a helical; Anchor for type IV membrane protein span at residues 593–615; sequence WLRASFGATVFAVLGFAMYKALL. Residues 616-618 are Mitochondrial intermembrane-facing; the sequence is KQR.

The protein belongs to the mitochondrial Rho GTPase family. In terms of assembly, homodimer. Interacts with the kinesin-binding proteins TRAK1/OIP106 and TRAK2/GRIF1, forming a link between mitochondria and the trafficking apparatus of the microtubules. Interacts with RAP1GDS1. Interacts with ARMCX1. Found in a complex with KIF5B, OGT, RHOT2 and TRAK1. Ubiquitinated by PRKN during mitophagy, leading to its degradation and enhancement of mitophagy. Deubiquitinated by USP30. In terms of processing, acetylation on Lys-92 decreases sensitivity of mitochondrial transport to elevated Ca(2+) levels, increases mitochondrial transport and promotes axon growth. Deacetylated by HDAC6 which blocks mitochondrial transport and mediates axon growth inhibition. In terms of tissue distribution, ubiquitously expressed. Expressed at high level in heart and skeletal muscle.

Its subcellular location is the mitochondrion outer membrane. It catalyses the reaction GTP + H2O = GDP + phosphate + H(+). It carries out the reaction ATP + H2O = ADP + phosphate + H(+). The catalysed reaction is UTP + H2O = UDP + phosphate + H(+). Atypical mitochondrial nucleoside-triphosphatase (NTPase) involved in mitochondrial trafficking. Probably involved in control of anterograde transport of mitochondria and their subcellular distribution. Promotes mitochondrial fission during high calcium conditions. Can hydrolyze GTP, ATP and UTP. In Homo sapiens (Human), this protein is Mitochondrial Rho GTPase 1 (RHOT1).